A 289-amino-acid polypeptide reads, in one-letter code: Thioredoxin-like protein 1 (289 aa).

The Thioredoxin domain occupies 2–109; it reads VGVKPVGSDP…EEKIKQHLEN (108 aa). A disulfide bridge connects residues Cys34 and Cys37. Phosphoserine is present on Ser113. The PITH domain occupies 115 to 285; the sequence is EDTDIPKGYM…NDFKRVVGKK (171 aa).

Component of the 19S regulatory cap of the 26S proteasome. Interacts with PSMD14/RPN11. Interacts with, and reduces EEF1A1. Ubiquitous.

The protein localises to the cytoplasm. Its subcellular location is the nucleus. Active thioredoxin with a redox potential of about -250 mV. This chain is Thioredoxin-like protein 1 (TXNL1), found in Homo sapiens (Human).